Consider the following 134-residue polypeptide: Phosphoribosyl-AMP cyclohydrolase (134 aa).

Mg(2+) is bound at residue Asp-77. Cys-78 lines the Zn(2+) pocket. Positions 79 and 81 each coordinate Mg(2+). The Zn(2+) site is built by Cys-95 and Cys-102.

This sequence belongs to the PRA-CH family. Homodimer. It depends on Mg(2+) as a cofactor. Zn(2+) serves as cofactor.

Its subcellular location is the cytoplasm. It catalyses the reaction 1-(5-phospho-beta-D-ribosyl)-5'-AMP + H2O = 1-(5-phospho-beta-D-ribosyl)-5-[(5-phospho-beta-D-ribosylamino)methylideneamino]imidazole-4-carboxamide. It participates in amino-acid biosynthesis; L-histidine biosynthesis; L-histidine from 5-phospho-alpha-D-ribose 1-diphosphate: step 3/9. Its function is as follows. Catalyzes the hydrolysis of the adenine ring of phosphoribosyl-AMP. In Pseudomonas paraeruginosa (strain DSM 24068 / PA7) (Pseudomonas aeruginosa (strain PA7)), this protein is Phosphoribosyl-AMP cyclohydrolase.